A 234-amino-acid polypeptide reads, in one-letter code: Ribonuclease HII (234 aa).

An RNase H type-2 domain is found at 30 to 221; the sequence is GPVAGVDEAG…VRNAAMGSSL (192 aa). Positions 36, 37, and 130 each coordinate a divalent metal cation.

This sequence belongs to the RNase HII family. Mn(2+) serves as cofactor. It depends on Mg(2+) as a cofactor.

The protein resides in the cytoplasm. The catalysed reaction is Endonucleolytic cleavage to 5'-phosphomonoester.. Its function is as follows. Endonuclease that specifically degrades the RNA of RNA-DNA hybrids. This Mycobacteroides abscessus (strain ATCC 19977 / DSM 44196 / CCUG 20993 / CIP 104536 / JCM 13569 / NCTC 13031 / TMC 1543 / L948) (Mycobacterium abscessus) protein is Ribonuclease HII.